A 463-amino-acid chain; its full sequence is Ribosome biogenesis protein NSA1 (463 aa).

The protein belongs to the NSA1 family. As to quaternary structure, component of the pre-66S ribosomal particle. Interacts with NOP7, RRP1 and RRP5.

Its subcellular location is the nucleus. It is found in the nucleolus. In terms of biological role, involved in the biogenesis of the 60S ribosomal subunit. The chain is Ribosome biogenesis protein NSA1 (NSA1) from Saccharomyces cerevisiae (strain ATCC 204508 / S288c) (Baker's yeast).